A 446-amino-acid polypeptide reads, in one-letter code: Chromosomal replication initiator protein DnaA (446 aa).

The segment at 1–72 is domain I, interacts with DnaA modulators; that stretch reads MENILDLWNK…ADTIYELTGE (72 aa). The domain II stretch occupies residues 72–109; sequence EELSIKFIIPQNQDEVEAMPKSPIKKMSKEDPVDIPQN. The interval 110–326 is domain III, AAA+ region; sequence MLNPKYTFDT…GALIRVVAYS (217 aa). Positions 154, 156, 157, and 158 each coordinate ATP. A domain IV, binds dsDNA region spans residues 327–446; the sequence is SLINKDINAD…HVKEIKEQLK (120 aa).

It belongs to the DnaA family. In terms of assembly, oligomerizes as a right-handed, spiral filament on DNA at oriC.

Its subcellular location is the cytoplasm. Its function is as follows. Plays an essential role in the initiation and regulation of chromosomal replication. ATP-DnaA binds to the origin of replication (oriC) to initiate formation of the DNA replication initiation complex once per cell cycle. Binds the DnaA box (a 9 base pair repeat at the origin) and separates the double-stranded (ds)DNA. Forms a right-handed helical filament on oriC DNA; dsDNA binds to the exterior of the filament while single-stranded (ss)DNA is stabiized in the filament's interior. The ATP-DnaA-oriC complex binds and stabilizes one strand of the AT-rich DNA unwinding element (DUE), permitting loading of DNA polymerase. After initiation quickly degrades to an ADP-DnaA complex that is not apt for DNA replication. Binds acidic phospholipids. This Bacillus pumilus (strain SAFR-032) protein is Chromosomal replication initiator protein DnaA.